A 553-amino-acid polypeptide reads, in one-letter code: MIYINFYELYNIKNIRPLIPSFHVCLLIMFLILYSQEILSFFFMCSKFSMNSLKFCVLFSFKTVYSLLKLIKTLIRKLLYCFHYALDLFADEYKVTANDKHYDYRLKSHRIKDKITTKCKGTTKYFNSRHFEIKNAVENLPSFSSNLTTIGNNLRIFWKNGKIRCIKLTCTPDAEIVNFTSNPNRYRFYETNMQELIRKTICEKSDKAIEKTFLCAQLFKTFCEDGVLQTFQPGFIQLDIASNLQEIKKGTKEYSLKSLEMTTTKESNETLCSNDSKHRIARLKNEDNTQKPISKKRKSKKASHKYLSSRTAPNVDFGNFAKERHRENDVSELYSKTKRTSKIRELYKEIGYDKNEFIHELRENEGPSVLYDSGLDQNGTNYDDAFAAPEAISIEKYVSINEEDPKSPKKETSYQVQEKLSQFFQEEMIHLLEMGEACTSRESQKTRKKNLKENIRKQRTTSTAIRDIAIKFLDDAKCETEDSTNLTNREGEAEKTLNTQPWKNLIENFISELQAEEEENNITEWSDIISVRNDEENQIYELPTCQLETNLLV.

The segment at 267 to 305 is disordered; it reads SNETLCSNDSKHRIARLKNEDNTQKPISKKRKSKKASHK. Over residues 275-289 the composition is skewed to basic and acidic residues; sequence DSKHRIARLKNEDNT. Residues 293–304 are compositionally biased toward basic residues; the sequence is ISKKRKSKKASH.

In Schizosaccharomyces pombe (strain 972 / ATCC 24843) (Fission yeast), this protein is Meiotic expression up-regulated protein 18 (meu18).